The sequence spans 115 residues: Large ribosomal subunit protein uL22 (115 aa).

The protein belongs to the universal ribosomal protein uL22 family. As to quaternary structure, part of the 50S ribosomal subunit.

Functionally, this protein binds specifically to 23S rRNA; its binding is stimulated by other ribosomal proteins, e.g. L4, L17, and L20. It is important during the early stages of 50S assembly. It makes multiple contacts with different domains of the 23S rRNA in the assembled 50S subunit and ribosome. Its function is as follows. The globular domain of the protein is located near the polypeptide exit tunnel on the outside of the subunit, while an extended beta-hairpin is found that lines the wall of the exit tunnel in the center of the 70S ribosome. This Streptomyces avermitilis (strain ATCC 31267 / DSM 46492 / JCM 5070 / NBRC 14893 / NCIMB 12804 / NRRL 8165 / MA-4680) protein is Large ribosomal subunit protein uL22.